Reading from the N-terminus, the 160-residue chain is Transcription antitermination protein NusB (160 aa).

This sequence belongs to the NusB family.

Involved in transcription antitermination. Required for transcription of ribosomal RNA (rRNA) genes. Binds specifically to the boxA antiterminator sequence of the ribosomal RNA (rrn) operons. This chain is Transcription antitermination protein NusB, found in Gluconobacter oxydans (strain 621H) (Gluconobacter suboxydans).